Consider the following 344-residue polypeptide: CRISPR-associated endonuclease Cas1 2 (344 aa).

Mn(2+)-binding residues include E167, H235, and E250.

It belongs to the CRISPR-associated endonuclease Cas1 family. Homodimer, forms a heterotetramer with a Cas2 homodimer. The cofactor is Mg(2+). Requires Mn(2+) as cofactor.

Its function is as follows. CRISPR (clustered regularly interspaced short palindromic repeat), is an adaptive immune system that provides protection against mobile genetic elements (viruses, transposable elements and conjugative plasmids). CRISPR clusters contain spacers, sequences complementary to antecedent mobile elements, and target invading nucleic acids. CRISPR clusters are transcribed and processed into CRISPR RNA (crRNA). Acts as a dsDNA endonuclease. Involved in the integration of spacer DNA into the CRISPR cassette. This chain is CRISPR-associated endonuclease Cas1 2, found in Rhodospirillum rubrum (strain ATCC 11170 / ATH 1.1.1 / DSM 467 / LMG 4362 / NCIMB 8255 / S1).